The chain runs to 321 residues: Malate dehydrogenase (321 aa).

Residues 10-15 (GAGQIG) and Asp34 each bind NAD(+). Substrate contacts are provided by Arg83 and Arg89. Residues Asn96 and 119–121 (ITN) contribute to the NAD(+) site. Asn121 and Arg152 together coordinate substrate. The Proton acceptor role is filled by His176.

This sequence belongs to the LDH/MDH superfamily. MDH type 3 family.

The enzyme catalyses (S)-malate + NAD(+) = oxaloacetate + NADH + H(+). Its function is as follows. Catalyzes the reversible oxidation of malate to oxaloacetate. This chain is Malate dehydrogenase, found in Xanthobacter autotrophicus (strain ATCC BAA-1158 / Py2).